The following is a 191-amino-acid chain: Polysulfide reductase chain B (191 aa).

4Fe-4S ferredoxin-type domains lie at 5-34 (YGMIHDENLCIGCQACNIACRSENKIPDSV), 50-83 (GTLSFNYHRQSCVQCENTPCVSVCPTKASYVNED), and 84-113 (GIVSVNVDLCVGCLYCIAACPYQARYVDPV). Residues C14, C17, C20, C24, C61, C64, C69, C73, C93, C96, C99, C103, C120, C123, C136, and C140 each contribute to the [4Fe-4S] cluster site.

As to quaternary structure, functional polysulfide reductase is made up of three different (A, B, and C) subunits.

In terms of biological role, component of the phosphorylative electron transport system with polysulfide as the terminal acceptor. The polypeptide is Polysulfide reductase chain B (psrB) (Wolinella succinogenes (strain ATCC 29543 / DSM 1740 / CCUG 13145 / JCM 31913 / LMG 7466 / NCTC 11488 / FDC 602W) (Vibrio succinogenes)).